The following is a 210-amino-acid chain: Homeobox protein Rhox5 (210 aa).

Positions 1–119 (MEAEGSSRKV…GNPGGRQMPL (119 aa)) are disordered. A compositionally biased stretch (basic and acidic residues) spans 17-30 (GVKEDSEEQHDVKA). Residues 47-79 (GQPGVGAVGTEGEGEELNGGKGHFGPGAPGPMG) show a composition bias toward gly residues. A DNA-binding region (homeobox; atypical) is located at residues 117 to 175 (MPLQGSRFAQHRLRELESILQRTNSFDVPREDLDRLMDACVSRVQNWFKIRRAAARRTR).

Its subcellular location is the nucleus. Functionally, transcription factor required for differentiation of embryonic stem cells (ESCs) into primordial germ cells. The polypeptide is Homeobox protein Rhox5 (Rhox5) (Mus musculus (Mouse)).